Reading from the N-terminus, the 617-residue chain is UvrABC system protein C (617 aa).

The GIY-YIG domain maps to 11-85 (TTPGVYIFRK…IKQHRPHYNV (75 aa)). Residues 194 to 229 (APVIARLKEDMKVAAQGQDFEQAARLRDRVQAVEKL) enclose the UVR domain.

This sequence belongs to the UvrC family. As to quaternary structure, interacts with UvrB in an incision complex.

It is found in the cytoplasm. In terms of biological role, the UvrABC repair system catalyzes the recognition and processing of DNA lesions. UvrC both incises the 5' and 3' sides of the lesion. The N-terminal half is responsible for the 3' incision and the C-terminal half is responsible for the 5' incision. This Deinococcus radiodurans (strain ATCC 13939 / DSM 20539 / JCM 16871 / CCUG 27074 / LMG 4051 / NBRC 15346 / NCIMB 9279 / VKM B-1422 / R1) protein is UvrABC system protein C.